The chain runs to 324 residues: Beta-ketoacyl-[acyl-carrier-protein] synthase III (324 aa).

Catalysis depends on residues Cys112 and His249. Residues 250–254 (QANRR) form an ACP-binding region. Asn279 is an active-site residue.

This sequence belongs to the thiolase-like superfamily. FabH family. In terms of assembly, homodimer.

The protein localises to the cytoplasm. It carries out the reaction malonyl-[ACP] + acetyl-CoA + H(+) = 3-oxobutanoyl-[ACP] + CO2 + CoA. It functions in the pathway lipid metabolism; fatty acid biosynthesis. Its function is as follows. Catalyzes the condensation reaction of fatty acid synthesis by the addition to an acyl acceptor of two carbons from malonyl-ACP. Catalyzes the first condensation reaction which initiates fatty acid synthesis and may therefore play a role in governing the total rate of fatty acid production. Possesses both acetoacetyl-ACP synthase and acetyl transacylase activities. Its substrate specificity determines the biosynthesis of branched-chain and/or straight-chain of fatty acids. The protein is Beta-ketoacyl-[acyl-carrier-protein] synthase III of Streptococcus equi subsp. zooepidemicus (strain H70).